Reading from the N-terminus, the 466-residue chain is Uronate isomerase (466 aa).

The protein belongs to the metallo-dependent hydrolases superfamily. Uronate isomerase family.

The enzyme catalyses D-glucuronate = D-fructuronate. The catalysed reaction is aldehydo-D-galacturonate = keto-D-tagaturonate. The protein operates within carbohydrate metabolism; pentose and glucuronate interconversion. This is Uronate isomerase from Clostridium perfringens (strain 13 / Type A).